A 106-amino-acid polypeptide reads, in one-letter code: Nucleoid-associated protein Rpal_0620 (106 aa).

Belongs to the YbaB/EbfC family. Homodimer.

The protein localises to the cytoplasm. It localises to the nucleoid. Binds to DNA and alters its conformation. May be involved in regulation of gene expression, nucleoid organization and DNA protection. The sequence is that of Nucleoid-associated protein Rpal_0620 from Rhodopseudomonas palustris (strain TIE-1).